The chain runs to 296 residues: Nucleotide-binding protein SGO_0954 (296 aa).

ATP is bound at residue 13–20; that stretch reads GMSGAGKT. 63–66 lines the GTP pocket; that stretch reads DMRS.

This sequence belongs to the RapZ-like family.

Its function is as follows. Displays ATPase and GTPase activities. The polypeptide is Nucleotide-binding protein SGO_0954 (Streptococcus gordonii (strain Challis / ATCC 35105 / BCRC 15272 / CH1 / DL1 / V288)).